The following is a 225-amino-acid chain: MNSIEFPLLDRTTQNSVISTTSNDLSNWSRLSSLWPLLYGTSCCFIEFASLIGSRFDFDRYGLVPRSSPRQADLILTAGTVTMKMAPSLVRLYEQMPEPKYVIAMGACTISGGMFSTDSYSTVRGVDKLIPVDVYLPGCPPKPEAVIDAITKLRKKISREIYEDRIKSQRENRCFTTNHKLKVGRSIHTGNYDREFLYQPTSTSEIPPETFFKYKSSVSSHELVN.

Positions 43, 44, 108, and 139 each coordinate [4Fe-4S] cluster.

The protein belongs to the complex I 20 kDa subunit family. In terms of assembly, NDH is composed of at least 16 different subunits, 5 of which are encoded in the nucleus. The cofactor is [4Fe-4S] cluster.

Its subcellular location is the plastid. The protein localises to the chloroplast thylakoid membrane. The catalysed reaction is a plastoquinone + NADH + (n+1) H(+)(in) = a plastoquinol + NAD(+) + n H(+)(out). The enzyme catalyses a plastoquinone + NADPH + (n+1) H(+)(in) = a plastoquinol + NADP(+) + n H(+)(out). NDH shuttles electrons from NAD(P)H:plastoquinone, via FMN and iron-sulfur (Fe-S) centers, to quinones in the photosynthetic chain and possibly in a chloroplast respiratory chain. The immediate electron acceptor for the enzyme in this species is believed to be plastoquinone. Couples the redox reaction to proton translocation, and thus conserves the redox energy in a proton gradient. This Daucus carota (Wild carrot) protein is NAD(P)H-quinone oxidoreductase subunit K, chloroplastic.